Reading from the N-terminus, the 156-residue chain is Transcription antitermination protein NusB (156 aa).

Belongs to the NusB family.

Functionally, involved in transcription antitermination. Required for transcription of ribosomal RNA (rRNA) genes. Binds specifically to the boxA antiterminator sequence of the ribosomal RNA (rrn) operons. The sequence is that of Transcription antitermination protein NusB from Syntrophotalea carbinolica (strain DSM 2380 / NBRC 103641 / GraBd1) (Pelobacter carbinolicus).